The sequence spans 56 residues: Large ribosomal subunit protein bL33 (56 aa).

The protein belongs to the bacterial ribosomal protein bL33 family.

The polypeptide is Large ribosomal subunit protein bL33 (Dichelobacter nodosus (strain VCS1703A)).